Here is a 456-residue protein sequence, read N- to C-terminus: Bifunctional protein GlmU (456 aa).

Residues 1–229 are pyrophosphorylase; the sequence is MYNCAIILAA…FEETMGVNSR (229 aa). UDP-N-acetyl-alpha-D-glucosamine-binding positions include 8–11, lysine 22, glutamine 73, and 78–79; these read LAAG and GT. Aspartate 103 provides a ligand contact to Mg(2+). The UDP-N-acetyl-alpha-D-glucosamine site is built by glycine 140, glutamate 155, asparagine 170, and asparagine 227. Asparagine 227 lines the Mg(2+) pocket. Residues 230–250 are linker; that stretch reads VQLAEAEKIMRNRINKIHMEN. The segment at 251 to 456 is N-acetyltransferase; that stretch reads GVTLIDHNNT…SWVYKKGLKK (206 aa). Residues arginine 332 and lysine 350 each contribute to the UDP-N-acetyl-alpha-D-glucosamine site. The Proton acceptor role is filled by histidine 362. Positions 365 and 376 each coordinate UDP-N-acetyl-alpha-D-glucosamine. Residues 385-386, alanine 422, and arginine 439 each bind acetyl-CoA; that span reads NY.

In the N-terminal section; belongs to the N-acetylglucosamine-1-phosphate uridyltransferase family. This sequence in the C-terminal section; belongs to the transferase hexapeptide repeat family. As to quaternary structure, homotrimer. It depends on Mg(2+) as a cofactor.

Its subcellular location is the cytoplasm. The enzyme catalyses alpha-D-glucosamine 1-phosphate + acetyl-CoA = N-acetyl-alpha-D-glucosamine 1-phosphate + CoA + H(+). It catalyses the reaction N-acetyl-alpha-D-glucosamine 1-phosphate + UTP + H(+) = UDP-N-acetyl-alpha-D-glucosamine + diphosphate. Its pathway is nucleotide-sugar biosynthesis; UDP-N-acetyl-alpha-D-glucosamine biosynthesis; N-acetyl-alpha-D-glucosamine 1-phosphate from alpha-D-glucosamine 6-phosphate (route II): step 2/2. It participates in nucleotide-sugar biosynthesis; UDP-N-acetyl-alpha-D-glucosamine biosynthesis; UDP-N-acetyl-alpha-D-glucosamine from N-acetyl-alpha-D-glucosamine 1-phosphate: step 1/1. It functions in the pathway bacterial outer membrane biogenesis; LPS lipid A biosynthesis. Functionally, catalyzes the last two sequential reactions in the de novo biosynthetic pathway for UDP-N-acetylglucosamine (UDP-GlcNAc). The C-terminal domain catalyzes the transfer of acetyl group from acetyl coenzyme A to glucosamine-1-phosphate (GlcN-1-P) to produce N-acetylglucosamine-1-phosphate (GlcNAc-1-P), which is converted into UDP-GlcNAc by the transfer of uridine 5-monophosphate (from uridine 5-triphosphate), a reaction catalyzed by the N-terminal domain. This chain is Bifunctional protein GlmU, found in Clostridium kluyveri (strain NBRC 12016).